The chain runs to 799 residues: ATP synthase subunit alpha (799 aa).

The segment at 1–549 (MTDNKNHSLI…EEVSLKPTTE (549 aa)) is ATP synthase alpha chain. An ATP-binding site is contributed by 170 to 177 (GDRQTGKT). The interval 550–799 (TSEAVQIEEK…KGPSGFTYLK (250 aa)) is unknown.

This sequence belongs to the ATPase alpha/beta chains family. As to quaternary structure, F-type ATPases have 2 components, CF(1) - the catalytic core - and CF(0) - the membrane proton channel. CF(1) has five subunits: alpha(3), beta(3), gamma(1), delta(1), epsilon(1). CF(0) has three main subunits: a(1), b(2) and c(9-12). The alpha and beta chains form an alternating ring which encloses part of the gamma chain. CF(1) is attached to CF(0) by a central stalk formed by the gamma and epsilon chains, while a peripheral stalk is formed by the delta and b chains.

It localises to the cell membrane. The enzyme catalyses ATP + H2O + 4 H(+)(in) = ADP + phosphate + 5 H(+)(out). Its function is as follows. Produces ATP from ADP in the presence of a proton gradient across the membrane. The alpha chain is a regulatory subunit. The chain is ATP synthase subunit alpha (atpA) from Ureaplasma parvum serovar 3 (strain ATCC 27815 / 27 / NCTC 11736).